We begin with the raw amino-acid sequence, 830 residues long: Cadherin-16 (830 aa).

The signal sequence occupies residues 1-21 (MISARPWLLYLSVIQAFTTEA). Residues 22-788 (QPAESLHTEV…MKGMPTKLSA (767 aa)) are Extracellular-facing. Cadherin domains follow at residues 27-128 (LHTE…VPQF), 133-237 (YRAQ…SIVE), 244-338 (EPVH…APVC), 343-451 (PTVN…APEF), 457-566 (GPVT…PLKL), and 571-667 (YETS…VPAL). N519, N604, and N724 each carry an N-linked (GlcNAc...) asparagine glycan. The tract at residues 668–788 (TLSAGPSRHL…MKGMPTKLSA (121 aa)) is ectodomain G. The chain crosses the membrane as a helical span at residues 789–809 (VGVLLGTLAAIGFILILVFTH). At 810–830 (LALARKDLDQPADSVPLKAAV) the chain is on the cytoplasmic side. Position 823 is a phosphoserine (S823).

In terms of tissue distribution, kidney specific.

It localises to the cell membrane. Cadherins are calcium-dependent cell adhesion proteins. They preferentially interact with themselves in a homophilic manner in connecting cells; cadherins may thus contribute to the sorting of heterogeneous cell types. The protein is Cadherin-16 (Cdh16) of Mus musculus (Mouse).